Reading from the N-terminus, the 846-residue chain is Translation initiation factor IF-2 (846 aa).

Residues 345–512 (SRAPVVTIMG…AVLLQSEVLE (168 aa)) enclose the tr-type G domain. The G1 stretch occupies residues 354–361 (GHVDHGKT). 354–361 (GHVDHGKT) is a GTP binding site. Residues 379 to 383 (GITQH) form a G2 region. The G3 stretch occupies residues 400 to 403 (DTPG). GTP is bound by residues 400–404 (DTPGH) and 454–457 (NKID). The interval 454-457 (NKID) is G4. Residues 490–492 (SAK) are G5.

This sequence belongs to the TRAFAC class translation factor GTPase superfamily. Classic translation factor GTPase family. IF-2 subfamily.

The protein localises to the cytoplasm. Functionally, one of the essential components for the initiation of protein synthesis. Protects formylmethionyl-tRNA from spontaneous hydrolysis and promotes its binding to the 30S ribosomal subunits. Also involved in the hydrolysis of GTP during the formation of the 70S ribosomal complex. In Francisella tularensis subsp. holarctica (strain FTNF002-00 / FTA), this protein is Translation initiation factor IF-2.